Reading from the N-terminus, the 65-residue chain is Large ribosomal subunit protein bL35 (65 aa).

This sequence belongs to the bacterial ribosomal protein bL35 family.

This chain is Large ribosomal subunit protein bL35, found in Prochlorococcus marinus (strain MIT 9215).